The chain runs to 103 residues: uncharacterized protein (103 aa).

This is an uncharacterized protein from Saccharomyces cerevisiae (strain ATCC 204508 / S288c) (Baker's yeast).